The following is a 243-amino-acid chain: R-spondin-2 (243 aa).

Residues 1-21 form the signal peptide; the sequence is MQFQLFSFALIILNCVDYSHC. Intrachain disulfides connect cysteine 40–cysteine 46, cysteine 43–cysteine 52, cysteine 55–cysteine 74, cysteine 78–cysteine 93, cysteine 96–cysteine 104, cysteine 101–cysteine 110, cysteine 113–cysteine 124, cysteine 128–cysteine 141, cysteine 145–cysteine 187, cysteine 156–cysteine 163, and cysteine 196–cysteine 203. One copy of the FU repeat lies at 90–134; it reads MNRCSRCRIENCDSCFSRDFCIKCKSGFYSLKGQCFEECPEGFAP. The TSP type-1 domain maps to 144–204; that stretch reads GCEVGPWSEW…RCKMAIRHCP (61 aa). The N-linked (GlcNAc...) asparagine glycan is linked to asparagine 160. A compositionally biased stretch (basic residues) spans 204–224; the sequence is PGGKRTTKKKDKRNKKKKKKL. The tract at residues 204 to 243 is disordered; that stretch reads PGGKRTTKKKDKRNKKKKKKLLERAQEQHSVVLATDRSSQ.

It belongs to the R-spondin family. Binds heparin.

The protein localises to the secreted. Activator of the canonical Wnt signaling pathway by acting as a ligand for lgr4-6 receptors. Upon binding to lgr4-6 (lgr4, lgr5 or lgr6), lgr4-6 associate with phosphorylated lrp6 and frizzled receptors that are activated by extracellular Wnt receptors, triggering the canonical Wnt signaling pathway to increase expression of target genes. Acts both in the canonical Wnt/beta-catenin-dependent pathway and in non-canonical Wnt signaling pathway. Activates neural markers and promotes muscle formation. Overexpression blocks activin, nodal and BMP4 signaling, suggesting that it may negatively regulate the TGF-beta pathway. During embryonic development, plays a crucial role in limb specification, amplifying the Wnt signaling pathway independently of LGR4-6 receptors, possibly by acting as a direct antagonistic ligand to RNF43 and ZNRF3, hence governing the number of limbs an embryo should form. This Xenopus laevis (African clawed frog) protein is R-spondin-2 (rspo2).